Reading from the N-terminus, the 180-residue chain is Protein sll1483 (180 aa).

An N-terminal signal peptide occupies residues 1–26 (MKTAARIVAFTALTGFALGMPTVAMA). Positions 45 to 176 (AMTIVEVAAG…GVIHVIDQVI (132 aa)) constitute an FAS1 domain.

The sequence is that of Protein sll1483 from Synechocystis sp. (strain ATCC 27184 / PCC 6803 / Kazusa).